The following is a 44-amino-acid chain: MITNGELPISRACNFTFSTGRFTVQFTSRILSIQFFSQCTSCTV.

This is an uncharacterized protein from Saccharomyces cerevisiae (strain ATCC 204508 / S288c) (Baker's yeast).